The sequence spans 288 residues: DegV domain-containing protein SAS0714 (288 aa).

The DegV domain occupies 3–282 (IAVMTDSTSY…SGGLGLGYVG (280 aa)). Residues T62 and S95 each contribute to the hexadecanoate site.

May bind long-chain fatty acids, such as palmitate, and may play a role in lipid transport or fatty acid metabolism. The polypeptide is DegV domain-containing protein SAS0714 (Staphylococcus aureus (strain MSSA476)).